A 128-amino-acid polypeptide reads, in one-letter code: MSVTKEQVIEFISNMTVLELSQFIKELEEKFGVSAAAPAVGMMMAAPTAASAEAEAEEKTEFDVILKEAGANKIAVIKVVRALTGLGLKEAKDKVDGAPSTLKEGVSKEDAEEAKKQLTEAGATVEVK.

The interval 97–128 is disordered; the sequence is GAPSTLKEGVSKEDAEEAKKQLTEAGATVEVK. Residues 105–118 show a composition bias toward basic and acidic residues; sequence GVSKEDAEEAKKQL.

This sequence belongs to the bacterial ribosomal protein bL12 family. As to quaternary structure, homodimer. Part of the ribosomal stalk of the 50S ribosomal subunit. Forms a multimeric L10(L12)X complex, where L10 forms an elongated spine to which 2 to 4 L12 dimers bind in a sequential fashion. Binds GTP-bound translation factors.

Its function is as follows. Forms part of the ribosomal stalk which helps the ribosome interact with GTP-bound translation factors. Is thus essential for accurate translation. This is Large ribosomal subunit protein bL12 from Lawsonia intracellularis (strain PHE/MN1-00).